The following is a 101-amino-acid chain: Urease subunit beta (101 aa).

It belongs to the urease beta subunit family. As to quaternary structure, heterotrimer of UreA (gamma), UreB (beta) and UreC (alpha) subunits. Three heterotrimers associate to form the active enzyme.

The protein localises to the cytoplasm. It carries out the reaction urea + 2 H2O + H(+) = hydrogencarbonate + 2 NH4(+). It functions in the pathway nitrogen metabolism; urea degradation; CO(2) and NH(3) from urea (urease route): step 1/1. The sequence is that of Urease subunit beta from Albidiferax ferrireducens (strain ATCC BAA-621 / DSM 15236 / T118) (Rhodoferax ferrireducens).